The chain runs to 185 residues: CASP-like protein 2D1 (185 aa).

Residues 1 to 15 (MRTHIDDSASGKNHH) are Cytoplasmic-facing. A helical membrane pass occupies residues 16 to 36 (LPMLWFFDSSLRLCAIPLSVA). Residues 37–64 (TMWITVTNKEDNSSYGMLKYNNLSALKY) lie on the Extracellular side of the membrane. Residues N48 and N58 are each glycosylated (N-linked (GlcNAc...) asparagine). A helical transmembrane segment spans residues 65–85 (MVLVSALCACYALLAAACSLV). Over 86–92 (RCFVSKA) the chain is Cytoplasmic. A helical transmembrane segment spans residues 93 to 113 (WIFFVSDQIVAYLAITSVAAV). The Extracellular portion of the chain corresponds to 114–145 (MEMYYLAYNGAKEDSWSEACSSYGSFCSKVKL). The helical transmembrane segment at 146–166 (ALILHTITFCCFFVIAVISAF) threads the bilayer. Residues 167–185 (RAFSVFDPPFVNSQEVQGD) are Cytoplasmic-facing.

It belongs to the Casparian strip membrane proteins (CASP) family. Homodimer and heterodimers.

It is found in the cell membrane. The polypeptide is CASP-like protein 2D1 (Glycine max (Soybean)).